The chain runs to 509 residues: 2-isopropylmalate synthase (509 aa).

In terms of domain architecture, Pyruvate carboxyltransferase spans 4-266 (VRIFDTTLRD…YTGIKTEEIY (263 aa)). Asp13, His201, His203, and Asn237 together coordinate Mn(2+). Residues 390–509 (TLDYFHISTG…FDYQAKGEKQ (120 aa)) form a regulatory domain region.

It belongs to the alpha-IPM synthase/homocitrate synthase family. LeuA type 1 subfamily. In terms of assembly, homodimer. Mn(2+) serves as cofactor.

The protein localises to the cytoplasm. It catalyses the reaction 3-methyl-2-oxobutanoate + acetyl-CoA + H2O = (2S)-2-isopropylmalate + CoA + H(+). Its pathway is amino-acid biosynthesis; L-leucine biosynthesis; L-leucine from 3-methyl-2-oxobutanoate: step 1/4. Catalyzes the condensation of the acetyl group of acetyl-CoA with 3-methyl-2-oxobutanoate (2-ketoisovalerate) to form 3-carboxy-3-hydroxy-4-methylpentanoate (2-isopropylmalate). This chain is 2-isopropylmalate synthase, found in Carboxydothermus hydrogenoformans (strain ATCC BAA-161 / DSM 6008 / Z-2901).